Consider the following 290-residue polypeptide: PIH1 domain-containing protein 1 (290 aa).

Residues serine 12, serine 16, and serine 173 each carry the phosphoserine modification.

The protein belongs to the PIH1 family. In terms of assembly, component of the R2TP complex composed at least of RUVBL1, RUVBL2, RPAP3 and PIHD1. Component of the PAQosome complex which is responsible for the biogenesis of several protein complexes and which consists of R2TP complex members RUVBL1, RUVBL2, RPAP3 and PIH1D1, URI complex members PFDN2, PFDN6, PDRG1, UXT and URI1 as well as ASDURF, POLR2E and DNAAF10/WDR92. Interacts with phosphorylated TELO2. Mediates interaction of TELO2 with the R2TP complex. Interacts with phosphorylated ECD, EFTUD2/SNRP116, RPB1 and UBR5 and with RPB1 in a phosphorylation-independent manner. Interacts with the core C/D box snoRNP particle components NOP58 and FBL and with RUVBL1/TIP49. Interacts with RPAP3 and DNAAF10. Interacts with histone H4 and with SWI/SNF complex member SMARCB1/SNF5. Interacts with the mTORC1 complex member RPTOR. Interacts with isoform 1 of MSL1.

It localises to the nucleus. Involved in the assembly of C/D box small nucleolar ribonucleoprotein (snoRNP) particles. Recruits the SWI/SNF complex to the core promoter of rRNA genes and enhances pre-rRNA transcription. Mediates interaction of TELO2 with the R2TP complex which is necessary for the stability of MTOR and SMG1. Positively regulates the assembly and activity of the mTORC1 complex. This chain is PIH1 domain-containing protein 1 (Pih1d1), found in Mus musculus (Mouse).